The primary structure comprises 635 residues: Threonine--tRNA ligase (635 aa).

The 61-residue stretch at Met1–Thr61 folds into the TGS domain. Residues Asp242–Pro533 are catalytic. Residues Cys333, His384, and His510 each contribute to the Zn(2+) site.

The protein belongs to the class-II aminoacyl-tRNA synthetase family. In terms of assembly, homodimer. Requires Zn(2+) as cofactor.

It is found in the cytoplasm. The catalysed reaction is tRNA(Thr) + L-threonine + ATP = L-threonyl-tRNA(Thr) + AMP + diphosphate + H(+). Functionally, catalyzes the attachment of threonine to tRNA(Thr) in a two-step reaction: L-threonine is first activated by ATP to form Thr-AMP and then transferred to the acceptor end of tRNA(Thr). Also edits incorrectly charged L-seryl-tRNA(Thr). The chain is Threonine--tRNA ligase from Rickettsia typhi (strain ATCC VR-144 / Wilmington).